We begin with the raw amino-acid sequence, 110 residues long: Multidrug transporter EmrE (110 aa).

4 consecutive transmembrane segments (helical) span residues 4–21 (YIYL…TTLM), 34–52 (VGTI…QTLA), 58–80 (IAYA…GFFG), and 87–104 (AIIG…INLL).

The protein belongs to the drug/metabolite transporter (DMT) superfamily. Small multidrug resistance (SMR) (TC 2.A.7.1) family. In terms of assembly, homodimer. Forms an antiparallel dimeric structure. Also forms dimers of homodimers.

Its subcellular location is the cell inner membrane. With respect to regulation, substrate identity influences both the ground-state and transition-state energies for the conformational exchange process, emphasizing the coupling between substrate binding and transport. Multidrug efflux protein that confers resistance to a wide range of toxic compounds, including ethidium, methyl viologen, acriflavine, tetraphenylphosphonium (TPP(+)), benzalkonium, propidium, dequalinium and the aminoglycoside antibiotics streptomycin and tobramycin. Can also transport the osmoprotectants betaine and choline. The drug efflux is coupled to an influx of protons. Can couple antiport of a drug to either one or two protons, performing both electrogenic and electroneutral transport of a single substrate. Simultaneously binds and cotransports proton and drug. The polypeptide is Multidrug transporter EmrE (emrE) (Escherichia coli (strain K12)).